Reading from the N-terminus, the 209-residue chain is MARYTGPLCKLCRREGMKLYLKGERCYTDKCAFDRRPYAPGQHGQRRTKLTQYGIQLRAKQTVKRIYGILERQFERYVEKAMQKAGDTRENLIQILEARLDNVVYRMGFAINRRQARQLVNHGHFLVNGKKVNIPSYLLRPNDVVEVREKSRDLEVIKKAIEANKERSIVPWIEVDYDNYRGTFLRYPSLEEVTDLPVDLQTVIEFYSR.

Residues cysteine 9, cysteine 12, cysteine 26, and cysteine 31 each coordinate Zn(2+). Residues 9–31 (CKLCRREGMKLYLKGERCYTDKC) form a C4-type zinc finger. The S4 RNA-binding domain occupies 98–161 (ARLDNVVYRM…RDLEVIKKAI (64 aa)).

The protein belongs to the universal ribosomal protein uS4 family. Part of the 30S ribosomal subunit. Contacts protein S5. The interaction surface between S4 and S5 is involved in control of translational fidelity. Zn(2+) serves as cofactor.

One of the primary rRNA binding proteins, it binds directly to 16S rRNA where it nucleates assembly of the body of the 30S subunit. In terms of biological role, with S5 and S12 plays an important role in translational accuracy. In Thermotoga maritima (strain ATCC 43589 / DSM 3109 / JCM 10099 / NBRC 100826 / MSB8), this protein is Small ribosomal subunit protein uS4 (rpsD).